Here is a 101-residue protein sequence, read N- to C-terminus: Small ribosomal subunit protein bS18c (101 aa).

This sequence belongs to the bacterial ribosomal protein bS18 family. In terms of assembly, part of the 30S ribosomal subunit.

The protein resides in the plastid. The protein localises to the chloroplast. This chain is Small ribosomal subunit protein bS18c, found in Nymphaea alba (White water-lily).